A 301-amino-acid polypeptide reads, in one-letter code: Sulfate adenylyltransferase subunit 2 (301 aa).

This sequence belongs to the PAPS reductase family. CysD subfamily. As to quaternary structure, heterodimer composed of CysD, the smaller subunit, and CysN.

It carries out the reaction sulfate + ATP + H(+) = adenosine 5'-phosphosulfate + diphosphate. The protein operates within sulfur metabolism; hydrogen sulfide biosynthesis; sulfite from sulfate: step 1/3. In terms of biological role, with CysN forms the ATP sulfurylase (ATPS) that catalyzes the adenylation of sulfate producing adenosine 5'-phosphosulfate (APS) and diphosphate, the first enzymatic step in sulfur assimilation pathway. APS synthesis involves the formation of a high-energy phosphoric-sulfuric acid anhydride bond driven by GTP hydrolysis by CysN coupled to ATP hydrolysis by CysD. This chain is Sulfate adenylyltransferase subunit 2, found in Trichlorobacter lovleyi (strain ATCC BAA-1151 / DSM 17278 / SZ) (Geobacter lovleyi).